The sequence spans 809 residues: MAATELRGVVGPGPAAIAAPGGGGAGPPVVGGGGGGRGDAGPGSGAASGTVAAAAAGGQGPGAGGVAAAAGPAPTPPAGGSGSSGTGGSGSAREGWLFKWTNYIKGYQRRWFVLSNGLLSYYRSKAEMRHTCRGTINLATANITVEDSCNFIISNGGAQTYHLKASSEVERQRWVTALELAKAKAVKMLAESDESGDEESVSQTDKTELQNTLRTLSSKVEDLSTCNDLIAKHGTALQRSLSELESLKLPAESNEKIKQVNERATLFRITSNAMINACRDFLVLAQTHSKKWQKSLQYERDQRIRLEETLEQLAKQHNHLERAFRGATVLPAHTSGSAGSGKDQCCSGKGDMSDEDDENEFFDAPEIITMPENLGHKRTGSNISGASSDISLDEQYKHQLEETKKEKRTRIPYKPNYSLNLWSIMKNCIGKELSKIPMPVNFNEPLSMLQRLTEDLEYHELLDRAAKCENSLEQLCYVAAFTVSSYSTTVFRTSKPFNPLLGETFELDRLEENGYRSLCEQVSHHPPAAAHHAESKNGWTLRQEIKITSKFRGKYLSIMPLGTIHCIFHATGHHYTWKKVTTTVHNIIVGKLWIDQSGEIDIVNHKTGDKCNLKFVPYSYFSRDVARKVTGEVTDPSGKVHFALLGTWDEKMDCFKVQPVSGENGGDARQRGHEAEESRVMLWKRNPLPKNAENMYYFSELALTLNAWEGGTAPTDSRLRPDQRLMENGRWDEANAEKQRLEEKQRLSRKKREAEAMKATEDGTPYDPYKALWFERKKDPVTKELTHIYRGEYWECKEKQDWNSCPDIF.

Alanine 2 carries the N-acetylalanine modification. Disordered regions lie at residues 17-49 (IAAPGGGGAGPPVVGGGGGGRGDAGPGSGAASG) and 63-91 (AGGVAAAAGPAPTPPAGGSGSSGTGGSGS). Composition is skewed to gly residues over residues 20–46 (PGGGGAGPPVVGGGGGGRGDAGPGSGA) and 79–90 (GGSGSSGTGGSG). Positions 90-183 (GSAREGWLFK…WVTALELAKA (94 aa)) constitute a PH domain. 119–124 (LSYYRS) contributes to the a 1,2-diacyl-sn-glycero-3-phospho-(1D-myo-inositol 4-phosphate) binding site. Phosphoserine is present on residues serine 192, serine 195, serine 200, serine 240, and serine 242. The stretch at 293–328 (QKSLQYERDQRIRLEETLEQLAKQHNHLERAFRGAT) forms a coiled coil. Glutamine 316 serves as a coordination point for 20-hydroxycholesterol. Glutamine 316 contributes to the 25-hydroxycholesterol binding site. A 7beta-hydroxycholesterol-binding site is contributed by glutamine 316. Glutamine 316 is a cholesterol binding site. Position 316 (glutamine 316) interacts with ergosterol. Residues 332 to 355 (AHTSGSAGSGKDQCCSGKGDMSDE) are disordered. A phosphoserine mark is found at serine 340, serine 347, and serine 353. Positions 360–366 (EFFDAPE) match the FFAT motif. A Phosphothreonine modification is found at threonine 379. Residues serine 381, serine 384, serine 387, serine 388, and serine 391 each carry the phosphoserine modification. A 1,2-diacyl-sn-glycero-3-phospho-(1D-myo-inositol 4-phosphate) contacts are provided by residues 495–498 (KPFN) and 524–525 (HH). A disordered region spans residues 729–761 (GRWDEANAEKQRLEEKQRLSRKKREAEAMKATE). A coiled-coil region spans residues 732–762 (DEANAEKQRLEEKQRLSRKKREAEAMKATED).

This sequence belongs to the OSBP family. As to quaternary structure, homodimer or homotrimer. Interacts (via FFAT motif) with VAPA. Interacts (via C-terminus) with RELCH (via the third HEAT repeat). Found in a complex composed of RELCH, OSBP1 and RAB11A. In terms of processing, the N-terminus is blocked.

It is found in the cytoplasm. Its subcellular location is the cytosol. It localises to the perinuclear region. The protein resides in the golgi apparatus membrane. The protein localises to the endoplasmic reticulum membrane. Lipid transporter involved in lipid countertransport between the Golgi complex and membranes of the endoplasmic reticulum: specifically exchanges sterol with phosphatidylinositol 4-phosphate (PI4P), delivering sterol to the Golgi in exchange for PI4P, which is degraded by the SAC1/SACM1L phosphatase in the endoplasmic reticulum. Binds cholesterol and a range of oxysterols including 25-hydroxycholesterol. Cholesterol binding promotes the formation of a complex with PP2A and a tyrosine phosphatase which dephosphorylates ERK1/2, whereas 25-hydroxycholesterol causes its disassembly. Regulates cholesterol efflux by decreasing ABCA1 stability. This is Oxysterol-binding protein 1 (OSBP) from Oryctolagus cuniculus (Rabbit).